The primary structure comprises 171 residues: Sec-independent protein translocase protein TatB (171 aa).

Residues 2–22 form a helical membrane-spanning segment; the sequence is FDGIGFMELLLIGVLGLVVLG. The segment at 69–171 is disordered; the sequence is SKGLSNLSPE…DTRSNPKANG (103 aa). Positions 88-97 are enriched in polar residues; that stretch reads QAAQSVNRPY. Low complexity-rich tracts occupy residues 114–130 and 138–158; these read HSPV…HTSP and PTAT…SEPS. Over residues 160-171 the composition is skewed to polar residues; that stretch reads GADTRSNPKANG.

It belongs to the TatB family. As to quaternary structure, the Tat system comprises two distinct complexes: a TatABC complex, containing multiple copies of TatA, TatB and TatC subunits, and a separate TatA complex, containing only TatA subunits. Substrates initially bind to the TatABC complex, which probably triggers association of the separate TatA complex to form the active translocon.

The protein resides in the cell inner membrane. In terms of biological role, part of the twin-arginine translocation (Tat) system that transports large folded proteins containing a characteristic twin-arginine motif in their signal peptide across membranes. Together with TatC, TatB is part of a receptor directly interacting with Tat signal peptides. TatB may form an oligomeric binding site that transiently accommodates folded Tat precursor proteins before their translocation. This chain is Sec-independent protein translocase protein TatB, found in Shewanella baltica (strain OS185).